A 726-amino-acid polypeptide reads, in one-letter code: Catalase-peroxidase (726 aa).

Residues 1–33 (MSTTDDTHNTLSTGKCPFHQGGHDRSAGAGTAS) form a disordered region. The segment at residues 105 to 226 (WHGAGTYRSI…LGATEMGLIY (122 aa)) is a cross-link (tryptophyl-tyrosyl-methioninium (Trp-Tyr) (with M-252)). His-106 acts as the Proton acceptor in catalysis. Residues 226–252 (YVNPEGPDHSGEPLSAAAAIRATFGNM) constitute a cross-link (tryptophyl-tyrosyl-methioninium (Tyr-Met) (with W-105)). His-267 is a heme b binding site.

The protein belongs to the peroxidase family. Peroxidase/catalase subfamily. Homodimer or homotetramer. Heme b is required as a cofactor. Formation of the three residue Trp-Tyr-Met cross-link is important for the catalase, but not the peroxidase activity of the enzyme.

It catalyses the reaction H2O2 + AH2 = A + 2 H2O. It carries out the reaction 2 H2O2 = O2 + 2 H2O. In terms of biological role, bifunctional enzyme with both catalase and broad-spectrum peroxidase activity. The chain is Catalase-peroxidase from Salmonella heidelberg (strain SL476).